The primary structure comprises 266 residues: Glucosamine-6-phosphate deaminase (266 aa).

Aspartate 72 functions as the Proton acceptor; for enolization step in the catalytic mechanism. The For ring-opening step role is filled by aspartate 141. The Proton acceptor; for ring-opening step role is filled by histidine 143. Catalysis depends on glutamate 148, which acts as the For ring-opening step.

The protein belongs to the glucosamine/galactosamine-6-phosphate isomerase family. NagB subfamily. Homohexamer.

The enzyme catalyses alpha-D-glucosamine 6-phosphate + H2O = beta-D-fructose 6-phosphate + NH4(+). It participates in amino-sugar metabolism; N-acetylneuraminate degradation; D-fructose 6-phosphate from N-acetylneuraminate: step 5/5. Its activity is regulated as follows. Allosterically activated by N-acetylglucosamine 6-phosphate (GlcNAc6P). In terms of biological role, catalyzes the reversible isomerization-deamination of glucosamine 6-phosphate (GlcN6P) to form fructose 6-phosphate (Fru6P) and ammonium ion. This is Glucosamine-6-phosphate deaminase from Aeromonas salmonicida (strain A449).